The chain runs to 156 residues: Arginine repressor (156 aa).

It belongs to the ArgR family.

It localises to the cytoplasm. Its pathway is amino-acid biosynthesis; L-arginine biosynthesis [regulation]. Regulates arginine biosynthesis genes. In Shewanella sediminis (strain HAW-EB3), this protein is Arginine repressor.